The chain runs to 87 residues: Protein anon-73B1 (87 aa).

The chain crosses the membrane as a helical span at residues 25–47 (LLIRYGLYVGALFQFVCISAAVL). Positions 51 to 87 (NPDGQSNPESGEVTEREGEPVRTRLHKIRKLEKKKRR) are disordered. Positions 63–72 (VTEREGEPVR) are enriched in basic and acidic residues. Positions 73–87 (TRLHKIRKLEKKKRR) are enriched in basic residues.

Belongs to the UPF0239 family.

The protein resides in the membrane. This Drosophila melanogaster (Fruit fly) protein is Protein anon-73B1 (anon-73B1).